The following is a 233-amino-acid chain: Proteasome subunit alpha (233 aa).

The protein belongs to the peptidase T1A family. As to quaternary structure, the 20S proteasome core is composed of 14 alpha and 14 beta subunits that assemble into four stacked heptameric rings, resulting in a barrel-shaped structure. The two inner rings, each composed of seven catalytic beta subunits, are sandwiched by two outer rings, each composed of seven alpha subunits. The catalytic chamber with the active sites is on the inside of the barrel. Has a gated structure, the ends of the cylinder being occluded by the N-termini of the alpha-subunits. Is capped at one or both ends by the proteasome regulatory ATPase, PAN. In terms of processing, the N-terminus is blocked.

It localises to the cytoplasm. Its activity is regulated as follows. The formation of the proteasomal ATPase PAN-20S proteasome complex, via the docking of the C-termini of PAN into the intersubunit pockets in the alpha-rings, triggers opening of the gate for substrate entry. Interconversion between the open-gate and close-gate conformations leads to a dynamic regulation of the 20S proteasome proteolysis activity. In terms of biological role, component of the proteasome core, a large protease complex with broad specificity involved in protein degradation. The T.acidophilum proteasome is able to cleave oligopeptides after Tyr, Leu, Phe, and to a lesser extent after Glu and Arg. Thus, displays chymotrypsin-like activity and low level of caspase-like and trypsin-like activities. The chain is Proteasome subunit alpha from Thermoplasma acidophilum (strain ATCC 25905 / DSM 1728 / JCM 9062 / NBRC 15155 / AMRC-C165).